Consider the following 607-residue polypeptide: MILLAFSSGRRLDFVHRSGVFFLQTLLWILCATVCGTEQYFNVEVWLQKYGYLPPTDPRMSVLRSAETMQSALAAMQQFYGINMTGKVDRNTIDWMKKPRCGVPDQTRGSSKFNIRRKRYALTGQKWQHKHITYSIKNVTPKVGDPETRRAIRRAFDVWQNVTPLTFEEVPYSELENGKRDVDITIIFASGFHGDSSPFDGEGGFLAHAYFPGPGIGGDTHFDSDEPWTLGNPNHDGNDLFLVAVHELGHALGLEHSNDPTAIMAPFYQYMETDNFKLPNDDLQGIQKIYGPPDKIPPPTRPLPTVPPHRSVPPADPRRHDRPKPPRPPTGRPSYPGAKPNICDGNFNTLAILRREMFVFKDQWFWRVRNNRVMDGYPMQITYFWRGLPPSIDAVYENSDGNFVFFKGNKYWVFKDTTLQPGYPHDLITLGNGIPPHGIDSAIWWEDVGKTYFFKGDRYWRYSEEMKTMDPGYPKPITIWKGIPESPQGAFVHKENGFTYFYKGKEYWKFNNQILKVEPGYPRSILKDFMGCDGPTDRDKEGLSPPDDVDIVIKLDNTASTVKAIAIVIPCILALCLLVLVYTVFQFKRKGTPRHILYCKRSMQEWV.

Positions 1–31 (MILLAFSSGRRLDFVHRSGVFFLQTLLWILC) are cleaved as a signal peptide. Residues 32-119 (ATVCGTEQYF…SSKFNIRRKR (88 aa)) constitute a propeptide that is removed on maturation. N-linked (GlcNAc...) asparagine glycosylation occurs at Asn-83. Positions 99-106 (PRCGVPDQ) match the Cysteine switch motif. Cys-101 is a binding site for Zn(2+). Residues 120 to 564 (YALTGQKWQH…LDNTASTVKA (445 aa)) lie on the Extracellular side of the membrane. Asp-183 is a Ca(2+) binding site. Zn(2+)-binding residues include His-193 and Asp-195. Ca(2+) is bound by residues Asp-200, Gly-201, Gly-203, and Phe-205. His-208 contributes to the Zn(2+) binding site. Ca(2+) contacts are provided by Gly-215, Gly-217, and Asp-219. A Zn(2+)-binding site is contributed by His-221. Asp-223 and Glu-226 together coordinate Ca(2+). His-246 is a Zn(2+) binding site. The active site involves Glu-247. Zn(2+)-binding residues include His-250 and His-256. A disordered region spans residues 281-340 (DDLQGIQKIYGPPDKIPPPTRPLPTVPPHRSVPPADPRRHDRPKPPRPPTGRPSYPGAKP). Residues 294-315 (DKIPPPTRPLPTVPPHRSVPPA) are compositionally biased toward pro residues. Hemopexin repeat units follow at residues 340–388 (PNIC…WRGL), 389–434 (PPSI…GNGI), 436–484 (PHGI…KGIP), and 485–532 (ESPQ…FMGC). A disulfide bond links Cys-343 and Cys-532. The chain crosses the membrane as a helical span at residues 565 to 585 (IAIVIPCILALCLLVLVYTVF). Residues 586–607 (QFKRKGTPRHILYCKRSMQEWV) lie on the Cytoplasmic side of the membrane.

Belongs to the peptidase M10A family. Interacts with CSPG4 through CSPG4 chondroitin sulfate glycosaminoglycan. Zn(2+) serves as cofactor. Ca(2+) is required as a cofactor. Post-translationally, the precursor is cleaved by a furin endopeptidase.

Its subcellular location is the cell membrane. Its function is as follows. Endopeptidase that degrades various components of the extracellular matrix, such as collagen type III and fibronectin. Activates progelatinase A. Involved in the matrix remodeling of blood vessels. It has no effect on type I, II, IV and V collagen. However, upon interaction with CSPG4, it may be involved in degradation and invasion of type I collagen by melanoma cells. This chain is Matrix metalloproteinase-16 (Mmp16), found in Mus musculus (Mouse).